The primary structure comprises 84 residues: Toxin Acra3 (84 aa).

The signal sequence occupies residues 1-17 (MKIIFLVLMMILSEVYS). An LCN-type CS-alpha/beta domain is found at 19-82 (RDGYPVHDGT…VYGDDGIFCK (64 aa)). 4 cysteine pairs are disulfide-bonded: Cys30-Cys81, Cys34-Cys57, Cys43-Cys62, and Cys47-Cys64. The residue at position 83 (Ser83) is a Serine amide.

It belongs to the long (4 C-C) scorpion toxin superfamily. Sodium channel inhibitor family. Beta subfamily. In terms of tissue distribution, expressed by the venom gland.

It is found in the secreted. Functionally, toxin with unknown target. In vivo, induces severe neurotoxic events in mice such as excitability and convulsions, leading to the death of the animals within a few minutes after injection. Exerts very strong cytotoxic effect on a mouse brain tumor cell line (BC3H1) (IC(50)=5 mg/ml). It exerts its effects by inducing a stronger necrosis than apoptosis in BC3H1 cells. The protein is Toxin Acra3 of Androctonus crassicauda (Arabian fat-tailed scorpion).